A 224-amino-acid polypeptide reads, in one-letter code: PKHD-type hydroxylase Shewmr4_3244 (224 aa).

The Fe2OG dioxygenase domain occupies 78–176 (QFYPPLFNRY…RTAAFMWLQS (99 aa)). Residues H96, D98, and H157 each contribute to the Fe cation site. 2-oxoglutarate is bound at residue R167.

Requires Fe(2+) as cofactor. L-ascorbate is required as a cofactor.

This is PKHD-type hydroxylase Shewmr4_3244 from Shewanella sp. (strain MR-4).